Here is a 110-residue protein sequence, read N- to C-terminus: NAD(P)H-quinone oxidoreductase subunit M (110 aa).

This sequence belongs to the complex I NdhM subunit family. NDH-1 can be composed of about 15 different subunits; different subcomplexes with different compositions have been identified which probably have different functions.

The protein resides in the cellular thylakoid membrane. It carries out the reaction a plastoquinone + NADH + (n+1) H(+)(in) = a plastoquinol + NAD(+) + n H(+)(out). The enzyme catalyses a plastoquinone + NADPH + (n+1) H(+)(in) = a plastoquinol + NADP(+) + n H(+)(out). In terms of biological role, NDH-1 shuttles electrons from an unknown electron donor, via FMN and iron-sulfur (Fe-S) centers, to quinones in the respiratory and/or the photosynthetic chain. The immediate electron acceptor for the enzyme in this species is believed to be plastoquinone. Couples the redox reaction to proton translocation, and thus conserves the redox energy in a proton gradient. Cyanobacterial NDH-1 also plays a role in inorganic carbon-concentration. The polypeptide is NAD(P)H-quinone oxidoreductase subunit M (Synechococcus elongatus (strain ATCC 33912 / PCC 7942 / FACHB-805) (Anacystis nidulans R2)).